A 118-amino-acid chain; its full sequence is MSKLIFLFVVATLATIKASPFDLNMSTPLCDGNLDNRPCRLGDFQVKEEYIRVPITKSADTSTFYTCAWRKMVPCTRWNMVYWNHRLMVRQFKNKPEDTLFLGIKIARPGDWLLGDSH.

Positions 1 to 18 (MSKLIFLFVVATLATIKA) are cleaved as a signal peptide. Asn-24 is a glycosylation site (N-linked (GlcNAc...) asparagine; by host).

This is an uncharacterized protein from Magallana gigas (Pacific oyster).